A 531-amino-acid chain; its full sequence is Phosphomethylpyrimidine synthase (531 aa).

Substrate-binding positions include Asn-167, Met-196, Tyr-225, His-261, 281-283 (SRG), 322-325 (DALR), and Glu-361. His-365 is a Zn(2+) binding site. Tyr-388 is a substrate binding site. Residue His-429 coordinates Zn(2+). [4Fe-4S] cluster-binding residues include Cys-511, Cys-514, and Cys-519.

Belongs to the ThiC family. [4Fe-4S] cluster is required as a cofactor.

The catalysed reaction is 5-amino-1-(5-phospho-beta-D-ribosyl)imidazole + S-adenosyl-L-methionine = 4-amino-2-methyl-5-(phosphooxymethyl)pyrimidine + CO + 5'-deoxyadenosine + formate + L-methionine + 3 H(+). Its pathway is cofactor biosynthesis; thiamine diphosphate biosynthesis. Its function is as follows. Catalyzes the synthesis of the hydroxymethylpyrimidine phosphate (HMP-P) moiety of thiamine from aminoimidazole ribotide (AIR) in a radical S-adenosyl-L-methionine (SAM)-dependent reaction. This chain is Phosphomethylpyrimidine synthase, found in Chlorobium chlorochromatii (strain CaD3).